Consider the following 448-residue polypeptide: Probable glycine dehydrogenase (decarboxylating) subunit 1 (448 aa).

The protein belongs to the GcvP family. N-terminal subunit subfamily. In terms of assembly, the glycine cleavage system is composed of four proteins: P, T, L and H. In this organism, the P 'protein' is a heterodimer of two subunits.

The catalysed reaction is N(6)-[(R)-lipoyl]-L-lysyl-[glycine-cleavage complex H protein] + glycine + H(+) = N(6)-[(R)-S(8)-aminomethyldihydrolipoyl]-L-lysyl-[glycine-cleavage complex H protein] + CO2. The glycine cleavage system catalyzes the degradation of glycine. The P protein binds the alpha-amino group of glycine through its pyridoxal phosphate cofactor; CO(2) is released and the remaining methylamine moiety is then transferred to the lipoamide cofactor of the H protein. This chain is Probable glycine dehydrogenase (decarboxylating) subunit 1, found in Listeria monocytogenes serotype 4b (strain F2365).